Consider the following 506-residue polypeptide: GMP synthase [glutamine-hydrolyzing] (506 aa).

One can recognise a Glutamine amidotransferase type-1 domain in the interval lysine 4–aspartate 192. Catalysis depends on cysteine 79, which acts as the Nucleophile. Active-site residues include histidine 167 and glutamate 169. Residues tryptophan 193–arginine 381 enclose the GMPS ATP-PPase domain. Position 220–226 (serine 220–serine 226) interacts with ATP.

As to quaternary structure, homodimer.

The enzyme catalyses XMP + L-glutamine + ATP + H2O = GMP + L-glutamate + AMP + diphosphate + 2 H(+). The protein operates within purine metabolism; GMP biosynthesis; GMP from XMP (L-Gln route): step 1/1. Catalyzes the synthesis of GMP from XMP. This chain is GMP synthase [glutamine-hydrolyzing], found in Porphyromonas gingivalis (strain ATCC BAA-308 / W83).